A 66-amino-acid polypeptide reads, in one-letter code: Beta-defensin 107A (66 aa).

Positions Met1–Thr22 are cleaved as a signal peptide. Cystine bridges form between Cys37-Cys51 and Cys41-Cys60.

This sequence belongs to the beta-defensin family.

The protein localises to the secreted. In terms of biological role, has antibacterial activity. In Gorilla gorilla gorilla (Western lowland gorilla), this protein is Beta-defensin 107A (DEFB107A).